The sequence spans 205 residues: Protein GrpE (205 aa).

The protein belongs to the GrpE family. As to quaternary structure, homodimer.

It is found in the cytoplasm. In terms of biological role, participates actively in the response to hyperosmotic and heat shock by preventing the aggregation of stress-denatured proteins, in association with DnaK and GrpE. It is the nucleotide exchange factor for DnaK and may function as a thermosensor. Unfolded proteins bind initially to DnaJ; upon interaction with the DnaJ-bound protein, DnaK hydrolyzes its bound ATP, resulting in the formation of a stable complex. GrpE releases ADP from DnaK; ATP binding to DnaK triggers the release of the substrate protein, thus completing the reaction cycle. Several rounds of ATP-dependent interactions between DnaJ, DnaK and GrpE are required for fully efficient folding. In Shewanella loihica (strain ATCC BAA-1088 / PV-4), this protein is Protein GrpE.